The sequence spans 514 residues: Peptide chain release factor 3 (514 aa).

The tr-type G domain maps to 8-268; that stretch reads KKRRTFAIIS…TFLKFAPEPH (261 aa). GTP-binding positions include 17-24, 85-89, and 139-142; these read SHPDAGKT, DTPGH, and NKLD.

It belongs to the TRAFAC class translation factor GTPase superfamily. Classic translation factor GTPase family. PrfC subfamily.

The protein resides in the cytoplasm. Functionally, increases the formation of ribosomal termination complexes and stimulates activities of RF-1 and RF-2. It binds guanine nucleotides and has strong preference for UGA stop codons. It may interact directly with the ribosome. The stimulation of RF-1 and RF-2 is significantly reduced by GTP and GDP, but not by GMP. This Streptococcus thermophilus (strain CNRZ 1066) protein is Peptide chain release factor 3.